The sequence spans 301 residues: Glycine--tRNA ligase alpha subunit (301 aa).

The protein belongs to the class-II aminoacyl-tRNA synthetase family. As to quaternary structure, tetramer of two alpha and two beta subunits.

The protein resides in the cytoplasm. The catalysed reaction is tRNA(Gly) + glycine + ATP = glycyl-tRNA(Gly) + AMP + diphosphate. The protein is Glycine--tRNA ligase alpha subunit of Bordetella avium (strain 197N).